The sequence spans 427 residues: Inward rectifier potassium channel 2 (427 aa).

The Cytoplasmic portion of the chain corresponds to 1-81; that stretch reads MGSVRTNRYS…IFTTCVDIRW (81 aa). Cys-76 carries the S-nitrosocysteine modification. The chain crosses the membrane as a helical span at residues 82 to 106; the sequence is RWMLVIFCLAFVLSWLFFGCVFWLI. Residues 107–128 are Extracellular-facing; sequence ALLHGDLDASKEGKACVSEVNS. The segment at residues 129–140 is an intramembrane region (helical; Pore-forming); the sequence is FTAAFLFSIETQ. Residues 141 to 147 constitute an intramembrane region (pore-forming); it reads TTIGYGF. A Selectivity filter motif is present at residues 142–147; it reads TIGYGF. The Extracellular segment spans residues 148 to 156; the sequence is RCVTDECPI. The chain crosses the membrane as a helical span at residues 157-178; it reads AVFMVVFQSIVGCIIDAFIIGA. Topologically, residues 179–427 are cytoplasmic; sequence VMAKMAKPKK…PRPLRRESEI (249 aa). Residues 181–208 form a polyphosphoinositide (PIP2)-binding region; the sequence is AKMAKPKKRNETLVFSHNAVIAMRDGKL. The segment at 384–427 is disordered; it reads SKEEDDSENGVPESTSTDTPPDIDLHNQASVPLEPRPLRRESEI. The short motif at 425–427 is the PDZ-binding element; it reads SEI.

This sequence belongs to the inward rectifier-type potassium channel (TC 1.A.2.1) family. KCNJ2 subfamily. In terms of assembly, homotetramer. Homomultimeric and heteromultimeric association with KCNJ4/Kir2.3. Can form heteromeric channels with Kir2.6/KCNJ18. Associates, via its PDZ-recognition domain, with a complex containing LIN7A, LIN7B, LIN7C, DLG1, CASK and APBA1. S-nitrosylation increases the open probability and inward rectifying currents.

It is found in the cell membrane. The protein resides in the sarcolemma. The protein localises to the T-tubule. The enzyme catalyses K(+)(in) = K(+)(out). With respect to regulation, activated by phosphatidylinositol 4,5 biphosphate (PtdIns(4,5)P2). Its function is as follows. Inward rectifier potassium channels are characterized by a greater tendency to allow potassium to flow into the cell rather than out of it. Their voltage dependence is regulated by the concentration of extracellular potassium; as external potassium is raised, the voltage range of the channel opening shifts to more positive voltages. The inward rectification is mainly due to the blockage of outward current by internal magnesium. Can be blocked by extracellular barium or cesium. Probably participates in establishing action potential waveform and excitability of neuronal and muscle tissues. The polypeptide is Inward rectifier potassium channel 2 (KCNJ2) (Macaca mulatta (Rhesus macaque)).